A 205-amino-acid chain; its full sequence is Large ribosomal subunit protein uL3c (205 aa).

Residues 127–153 are disordered; the sequence is HFSRGPMSHGSKNHRQPGSIGAGTTPG.

Belongs to the universal ribosomal protein uL3 family. In terms of assembly, part of the 50S ribosomal subunit.

The protein resides in the plastid. It localises to the chloroplast. Functionally, one of the primary rRNA binding proteins, it binds directly near the 3'-end of the 23S rRNA, where it nucleates assembly of the 50S subunit. The protein is Large ribosomal subunit protein uL3c (rpl3) of Porphyra purpurea (Red seaweed).